We begin with the raw amino-acid sequence, 302 residues long: Acetyl-coenzyme A carboxylase carboxyl transferase subunit beta (302 aa).

Residues 25 to 294 enclose the CoA carboxyltransferase N-terminal domain; sequence VWTKCDSCGQ…PHFDEAAPVS (270 aa). Zn(2+) contacts are provided by Cys-29, Cys-32, Cys-48, and Cys-51. Residues 29–51 form a C4-type zinc finger; that stretch reads CDSCGQVLYRAELERNLEVCPKC. The disordered stretch occupies residues 281-302; it reads NQPQPHFDEAAPVSEQENQADA.

It belongs to the AccD/PCCB family. Acetyl-CoA carboxylase is a heterohexamer composed of biotin carboxyl carrier protein (AccB), biotin carboxylase (AccC) and two subunits each of ACCase subunit alpha (AccA) and ACCase subunit beta (AccD). It depends on Zn(2+) as a cofactor.

Its subcellular location is the cytoplasm. It carries out the reaction N(6)-carboxybiotinyl-L-lysyl-[protein] + acetyl-CoA = N(6)-biotinyl-L-lysyl-[protein] + malonyl-CoA. It functions in the pathway lipid metabolism; malonyl-CoA biosynthesis; malonyl-CoA from acetyl-CoA: step 1/1. Component of the acetyl coenzyme A carboxylase (ACC) complex. Biotin carboxylase (BC) catalyzes the carboxylation of biotin on its carrier protein (BCCP) and then the CO(2) group is transferred by the transcarboxylase to acetyl-CoA to form malonyl-CoA. This Serratia proteamaculans (strain 568) protein is Acetyl-coenzyme A carboxylase carboxyl transferase subunit beta.